The sequence spans 91 residues: Putative regulatory protein Cphy_2880 (91 aa).

Belongs to the RemA family.

This chain is Putative regulatory protein Cphy_2880, found in Lachnoclostridium phytofermentans (strain ATCC 700394 / DSM 18823 / ISDg) (Clostridium phytofermentans).